The sequence spans 320 residues: Taste receptor type 2 member 129 (320 aa).

The Extracellular portion of the chain corresponds to 1–8 (MDGIVQNM). The chain crosses the membrane as a helical span at residues 9-29 (FTFIVIVEIIIGWIGNGFIAL). Residues 30-55 (VNCIHWYKRRKISALNQILTALAFSR) lie on the Cytoplasmic side of the membrane. A helical membrane pass occupies residues 56-76 (IYLLLTVFTVIAVSTLYTHVL). Residues 77–88 (VTRRVVKLINFH) lie on the Extracellular side of the membrane. The chain crosses the membrane as a helical span at residues 89-109 (LLFSNHFSMWLAACLGLYYFL). Residues 110-128 (KIAHFPNSIFVYLKMRINQ) are Cytoplasmic-facing. The helical transmembrane segment at 129–149 (VVSGTLLMSLGLLFLNTLLIN) threads the bilayer. Topologically, residues 150-185 (SYIDTKIDDYREHLLYDFTSNNTASFYRVILVINNC) are extracellular. The N-linked (GlcNAc...) asparagine glycan is linked to Asn170. A helical membrane pass occupies residues 186–206 (IFTSIPFTLSQSTFLLLIFSL). Topologically, residues 207–233 (WRHYKKMQQHAQRCRDVLADAHIRVLQ) are cytoplasmic. A helical transmembrane segment spans residues 234 to 254 (TMVTYVLLCAIFFLSLSMQIL). Residues 255 to 264 (RSELLKNILY) lie on the Extracellular side of the membrane. Residues 265-285 (VRFCEIVAAVFPSGHSCVLIC) form a helical membrane-spanning segment. Residues 286–320 (RDTNLRGTFLSVLSWLKQRFTSWIPNINCRSSCIF) lie on the Cytoplasmic side of the membrane.

Belongs to the G-protein coupled receptor T2R family.

The protein resides in the membrane. Putative taste receptor which may play a role in the perception of bitterness. The polypeptide is Taste receptor type 2 member 129 (Mus musculus (Mouse)).